A 230-amino-acid polypeptide reads, in one-letter code: Ropporin-1-like protein (230 aa).

One can recognise an RIIa domain in the interval 17–54; it reads PELPDILKQFTKAAIRTQPADVLQWSAGYFSALSRGDP.

The protein belongs to the ropporin family. Component of the axonemal radial spoke complex 1 (RS1), at least composed of spoke head proteins RSPH1, RSPH3, RSPH9 and the cilia-specific component RSPH4A or sperm-specific component RSPH6A, spoke stalk proteins RSPH14, DNAJB13, DYDC1, ROPN1L and NME5, and the anchor protein IQUB. May interact with AKAP3. Interacts with FSCB; the interaction increases upon spermatozoa capacitation conditions. Interacts with CFAP61. In terms of processing, sumoylated, sumoylation decreases upon spermatozoa capacitation conditions.

The protein localises to the cell projection. The protein resides in the cilium. It localises to the flagellum. In terms of biological role, functions as part of axonemal radial spoke complexes that play an important part in the motility of sperm and cilia. Important for male fertility. With ROPN1, involved in fibrous sheath integrity and sperm motility, plays a role in PKA-dependent signaling processes required for spermatozoa capacitation. In Macaca fascicularis (Crab-eating macaque), this protein is Ropporin-1-like protein (ROPN1L).